We begin with the raw amino-acid sequence, 118 residues long: UPF0102 protein Arth_2474 (118 aa).

It belongs to the UPF0102 family.

The protein is UPF0102 protein Arth_2474 of Arthrobacter sp. (strain FB24).